A 68-amino-acid chain; its full sequence is MPFINIKLVPENGGPTNEQKQQLIEGVSDLMVKVLNKNKASIVVIIDEVDSNNYGLGGESVHHLRQKN.

Pro2 serves as the catalytic Proton acceptor; via imino nitrogen.

Belongs to the 4-oxalocrotonate tautomerase family.

The polypeptide is Probable tautomerase HP_0924 (Helicobacter pylori (strain ATCC 700392 / 26695) (Campylobacter pylori)).